A 241-amino-acid chain; its full sequence is DNA repair protein RecO (241 aa).

This sequence belongs to the RecO family.

Functionally, involved in DNA repair and RecF pathway recombination. The polypeptide is DNA repair protein RecO (Phocaeicola vulgatus (strain ATCC 8482 / DSM 1447 / JCM 5826 / CCUG 4940 / NBRC 14291 / NCTC 11154) (Bacteroides vulgatus)).